The primary structure comprises 612 residues: 1,8-cineole synthase, chloroplastic (612 aa).

Residues 1–52 (MALVSVAPLASRSCLSKSLISSTHELKPLRRTILPTLRWKSATPSINMCLTT) constitute a chloroplast transit peptide. Asp-363, Asp-367, and Asp-515 together coordinate Mg(2+). A DDXXD motif motif is present at residues 363 to 367 (DDIYD).

The protein belongs to the terpene synthase family. Tpsd subfamily. Requires Mg(2+) as cofactor. Mn(2+) serves as cofactor.

Its subcellular location is the plastid. The protein localises to the chloroplast. The enzyme catalyses (2E)-geranyl diphosphate + H2O = 1,8-cineole + diphosphate. It participates in terpene metabolism; oleoresin biosynthesis. Its function is as follows. Terpene synthase (TPS) involved in the biosynthesis of monoterpene natural products included in conifer oleoresin secretions and volatile emissions; these compounds contribute to biotic and abiotic stress defense against herbivores and pathogens. Catalyzes the conversion of (2E)-geranyl diphosphate (GPP) to 1,8-cineole. In Picea sitchensis (Sitka spruce), this protein is 1,8-cineole synthase, chloroplastic.